Here is a 136-residue protein sequence, read N- to C-terminus: Large ribosomal subunit protein uL16 (136 aa).

The protein belongs to the universal ribosomal protein uL16 family. Part of the 50S ribosomal subunit.

Functionally, binds 23S rRNA and is also seen to make contacts with the A and possibly P site tRNAs. This is Large ribosomal subunit protein uL16 from Shewanella sediminis (strain HAW-EB3).